The following is a 417-amino-acid chain: Cytoplasmic tRNA 2-thiolation protein 2 (417 aa).

The segment covering 1-11 has biased composition (acidic residues); that stretch reads MCSIVEDDFGD. The segment at 1-24 is disordered; sequence MCSIVEDDFGDEGGAHAMKEDTPQ. The span at 13-22 shows a compositional bias: basic and acidic residues; the sequence is GGAHAMKEDT.

The protein belongs to the CTU2/NCS2 family.

Its subcellular location is the cytoplasm. It participates in tRNA modification; 5-methoxycarbonylmethyl-2-thiouridine-tRNA biosynthesis. Its function is as follows. Plays a central role in 2-thiolation of mcm(5)S(2)U at tRNA wobble positions of tRNA(Lys), tRNA(Glu) and tRNA(Gln). May act by forming a heterodimer with NCS6/CTU1 that ligates sulfur from thiocarboxylated URM1 onto the uridine of tRNAs at wobble position. The polypeptide is Cytoplasmic tRNA 2-thiolation protein 2 (Anopheles gambiae (African malaria mosquito)).